A 305-amino-acid polypeptide reads, in one-letter code: Ribosomal RNA small subunit methyltransferase H (305 aa).

Residues 47–49 (GGH), aspartate 66, phenylalanine 93, aspartate 108, and glutamine 115 contribute to the S-adenosyl-L-methionine site.

This sequence belongs to the methyltransferase superfamily. RsmH family.

Its subcellular location is the cytoplasm. It carries out the reaction cytidine(1402) in 16S rRNA + S-adenosyl-L-methionine = N(4)-methylcytidine(1402) in 16S rRNA + S-adenosyl-L-homocysteine + H(+). Functionally, specifically methylates the N4 position of cytidine in position 1402 (C1402) of 16S rRNA. The chain is Ribosomal RNA small subunit methyltransferase H from Prochlorococcus marinus (strain MIT 9211).